We begin with the raw amino-acid sequence, 119 residues long: Large ribosomal subunit protein bL20 (119 aa).

The protein belongs to the bacterial ribosomal protein bL20 family.

Its function is as follows. Binds directly to 23S ribosomal RNA and is necessary for the in vitro assembly process of the 50S ribosomal subunit. It is not involved in the protein synthesizing functions of that subunit. This is Large ribosomal subunit protein bL20 from Dechloromonas aromatica (strain RCB).